Consider the following 383-residue polypeptide: MGEVGPTNRTKTKLDKQQESENRVPHEPPPFTLSDLKKAIPPHCFERSLVKSFYHVIHDIIILSFFYYVAANYIPMLPQNLRYVAWPIYWAIQGCVQLGILVLGHECGHHAFSDYQWVDDMVGFVLHSSQLIPYFSWKHSHRRHHSNTASIERDEVYPPAYKNDLPWFAKYLRNPVGRFLMIFGALLFGWPSYLLFNANGRLYDRFASHYDPQSPIFNNRERLQVIASDVGLVFAYFVLYKIALAKGFVWLICVYGVPYVILNGLIVLITFLQHTHPNLPRYDLSEWDWLRGALSTVDRDYGMLNKVFHNVTDTHLVHHLFTTMPHYRAKEATEVIKPILGDYYKFDDTPFLKALWKDMGKCIYVESDVPGKNKGVYWYNNDI.

The disordered stretch occupies residues 1–30 (MGEVGPTNRTKTKLDKQQESENRVPHEPPP). Positions 12-26 (TKLDKQQESENRVPH) are enriched in basic and acidic residues. The next 2 membrane-spanning stretches (helical) occupy residues 56-76 (VIHDIIILSFFYYVAANYIPM) and 84-104 (VAWPIYWAIQGCVQLGILVLG). The Histidine box-1 signature appears at 105–109 (HECGH). The short motif at 141 to 145 (HRRHH) is the Histidine box-2 element. 3 helical membrane-spanning segments follow: residues 179–199 (FLMIFGALLFGWPSYLLFNAN), 225–245 (VIASDVGLVFAYFVLYKIALA), and 249–269 (VWLICVYGVPYVILNGLIVLI). The Histidine box-3 motif lies at 315–319 (HLVHH).

Belongs to the fatty acid desaturase type 1 family. As to expression, expressed in developing seeds, but not in leaves.

The protein localises to the membrane. The enzyme catalyses a (9Z,12Z)-octadecadienoyl-containing glycerolipid + 2 Fe(II)-[cytochrome b5] + O2 + 2 H(+) = a (9Z,11E,13E)-octadecatrienoyl-containing glycerolipid + 2 Fe(III)-[cytochrome b5] + 2 H2O. It carries out the reaction (9Z,12Z,15Z)-octadecatrienoyl-containing glycerolipid + 2 Fe(II)-[cytochrome b5] + O2 + 2 H(+) = a (9Z,11E,13E,15Z)-octadecatetraenoyl-containing glycerolipid + 2 Fe(III)-[cytochrome b5] + 2 H2O. Its pathway is lipid metabolism; polyunsaturated fatty acid biosynthesis. In terms of biological role, converts linoleic acid to alpha-eleostearic acid (18:3(9Z,11E,13E)) and alpha-linolenic acid to alpha-parinaric acid (18:4(9Z,11E, 13E, 15Z)). Converts a single cis double bond at carbon 12 to two conjugated trans bonds at positions 11 and 13. This chain is Delta(12) acyl-lipid conjugase (11E,13E-forming), found in Impatiens balsamina (Balsam).